Here is a 274-residue protein sequence, read N- to C-terminus: HTH-type transcriptional regulator GadX (274 aa).

An HTH araC/xylS-type domain is found at Thr-145 to Arg-242. 2 DNA-binding regions (H-T-H motif) span residues Ala-162 to Gly-183 and Ile-209 to Tyr-232.

In terms of assembly, homodimer.

In terms of biological role, positively regulates the expression of about fifteen genes involved in acid resistance such as gadA, gadB and gadC. Depending on the conditions (growth phase and medium), can repress gadW. The sequence is that of HTH-type transcriptional regulator GadX (gadX) from Escherichia coli O6:H1 (strain CFT073 / ATCC 700928 / UPEC).